The primary structure comprises 277 residues: Large ribosomal subunit protein uL2 (277 aa).

2 disordered regions span residues 28 to 55 and 207 to 277; these read EPEK…RHRG and KAGR…RTQG. Composition is skewed to basic residues over residues 34–43, 209–220, and 255–265; these read THHKHSKQGR, GRTRHRGQRPHV, and LGRKTRNKKKR.

The protein belongs to the universal ribosomal protein uL2 family. Part of the 50S ribosomal subunit. Forms a bridge to the 30S subunit in the 70S ribosome.

In terms of biological role, one of the primary rRNA binding proteins. Required for association of the 30S and 50S subunits to form the 70S ribosome, for tRNA binding and peptide bond formation. It has been suggested to have peptidyltransferase activity; this is somewhat controversial. Makes several contacts with the 16S rRNA in the 70S ribosome. The sequence is that of Large ribosomal subunit protein uL2 from Microcystis aeruginosa (strain NIES-843 / IAM M-2473).